Consider the following 215-residue polypeptide: Sodium channel regulatory subunit beta-3 (215 aa).

The first 22 residues, 1 to 22 (MPAFNRLFPLASLLLILWVGVC), serve as a signal peptide directing secretion. At 23 to 156 (FPVCVEVPSE…EEAGEDFTSV (134 aa)) the chain is on the extracellular side. Cystine bridges form between Cys-26/Cys-48 and Cys-45/Cys-120. The Ig-like C2-type domain maps to 32–154 (ETEAVQGNPM…VTEEAGEDFT (123 aa)). N-linked (GlcNAc...) asparagine glycans are attached at residues Asn-95, Asn-109, Asn-113, and Asn-121. Residues 157–178 (VSEIMMYILLVFLTLWLLIEMI) form a helical membrane-spanning segment. The Cytoplasmic segment spans residues 179–215 (YCYRKVSKAEEAAQENASDYLAIPSENKENSAVPVEE).

The protein belongs to the sodium channel auxiliary subunit SCN3B (TC 8.A.17) family. As to quaternary structure, a voltage-gated sodium (Nav) channel consists of an ion-conducting pore-forming alpha subunit functional on its own that is regulated by one or more beta subunits. Forms homodimers and homotrimers. SCN3B is non-covalently associated with alpha subunits and induces the formation of alpha subunit oligomers, including trimers. Interacts with SCN5A/Nav1.5; regulatory subunit of SCN5A/Nav1.5. Interacts with SCN7A/Nav2.1; probable regulatory subunit of SCN7A/Nav2.1. Interacts with SCN10A; regulatory subunit of SCN10A/Nav1.8. Interacts with NFASC; probably involved in targeting the sodium channels to the nodes of Ranvier. In terms of processing, intramolecular disulfide bonds favor the voltage-gated sodium channel oligomeric complex assembly. Post-translationally, N-glycosylated.

The protein resides in the cell membrane. Regulatory subunit of multiple voltage-gated sodium (Nav) channels directly mediating the depolarization of excitable membranes. Navs, also called VGSCs (voltage-gated sodium channels) or VDSCs (voltage-dependent sodium channels), operate by switching between closed and open conformations depending on the voltage difference across the membrane. In the open conformation they allow Na(+) ions to selectively pass through the pore, along their electrochemical gradient. The influx of Na+ ions provokes membrane depolarization, initiating the propagation of electrical signals throughout cells and tissues. The accessory beta subunits participate in localization and functional modulation of the Nav channels. Modulates the activity of SCN2A/Nav1.2, causing a hyperpolarizing shift in the voltage-dependence of inactivation of the channel and increasing the fraction of channels operating in the fast gating mode. Modulates the activity of SCN5A/Nav1.5. Could also regulate the atypical sodium channel SCN7A/Nav2.1. Modulates the activity of SCN10A/Nav1.8, regulating its oligomerization and accelerating the recovery from inactivation. The chain is Sodium channel regulatory subunit beta-3 from Bos taurus (Bovine).